We begin with the raw amino-acid sequence, 102 residues long: Co-chaperonin GroES (102 aa).

This sequence belongs to the GroES chaperonin family. In terms of assembly, heptamer of 7 subunits arranged in a ring. Interacts with the chaperonin GroEL.

It is found in the cytoplasm. Together with the chaperonin GroEL, plays an essential role in assisting protein folding. The GroEL-GroES system forms a nano-cage that allows encapsulation of the non-native substrate proteins and provides a physical environment optimized to promote and accelerate protein folding. GroES binds to the apical surface of the GroEL ring, thereby capping the opening of the GroEL channel. The protein is Co-chaperonin GroES of Chlamydia caviae (strain ATCC VR-813 / DSM 19441 / 03DC25 / GPIC) (Chlamydophila caviae).